We begin with the raw amino-acid sequence, 200 residues long: Holliday junction resolvase RecU (200 aa).

The interval 1–27 is disordered; sequence MALKYPSGKEYRGNKPNAARRPAADYA. 4 residues coordinate Mg(2+): Thr84, Asp86, Glu99, and Gln118.

It belongs to the RecU family. In terms of assembly, homodimer. Mg(2+) serves as cofactor.

It localises to the cytoplasm. The enzyme catalyses Endonucleolytic cleavage at a junction such as a reciprocal single-stranded crossover between two homologous DNA duplexes (Holliday junction).. Endonuclease that resolves Holliday junction intermediates in genetic recombination. Cleaves mobile four-strand junctions by introducing symmetrical nicks in paired strands. Promotes annealing of linear ssDNA with homologous dsDNA. Required for DNA repair, homologous recombination and chromosome segregation. This Geobacillus kaustophilus (strain HTA426) protein is Holliday junction resolvase RecU.